The sequence spans 52 residues: MGSFLEVLCAIFIPPVGVFLRYGLGLEFWVCLLLTLFAFIPGLIYAIYVLTK.

The next 2 helical transmembrane spans lie at 4-24 (FLEV…RYGL) and 30-50 (VCLL…IYVL).

This sequence belongs to the UPF0057 (PMP3) family.

It is found in the membrane. The protein is UPF0057 membrane protein At1g57550 of Arabidopsis thaliana (Mouse-ear cress).